Reading from the N-terminus, the 412-residue chain is Cytochrome p450 CYP199A2 (412 aa).

Substrate is bound by residues 94–97 (RPPS) and serine 247. Residue cysteine 361 coordinates heme.

Belongs to the cytochrome P450 family. Interacts with the ferredoxin-like iron-sulfur protein ThcC. It depends on heme as a cofactor.

The protein localises to the cytoplasm. It catalyses the reaction 4-methoxybenzoate + AH2 + O2 = 4-hydroxybenzoate + formaldehyde + A + H2O. Its function is as follows. The oxidative demethylation of 4-methoxybenzoate requires the participation of the monooxygenase CYP199A2, the ferredoxin-like protein ThcC/RPA1872 and a ferredoxin reductase to mediate the transfer of electrons from NADH to CYP199A2. It is also active with 4-ethylbenzoate. The sequence is that of Cytochrome p450 CYP199A2 from Rhodopseudomonas palustris (strain ATCC BAA-98 / CGA009).